The primary structure comprises 421 residues: ATP-dependent RNA helicase RhlB (421 aa).

Residues 9-37 carry the Q motif motif; the sequence is QKFSDFALHPKVVEALEKKGFHNCTPIQA. One can recognise a Helicase ATP-binding domain in the interval 40-219; it reads LPLTLAGRDV…FEQMNNAEYI (180 aa). 53–60 contributes to the ATP binding site; sequence AQTGTGKT. The short motif at 165–168 is the DEAD box element; it reads DEAD. A Helicase C-terminal domain is found at 245 to 390; it reads RLLQTLIEEE…VSKYNPDALM (146 aa). Residues 392-421 are disordered; sequence DLPKPLRLTRPRTGNGPRRTGAPRNRRRSG. Residues 402–414 are compositionally biased toward low complexity; sequence PRTGNGPRRTGAP.

It belongs to the DEAD box helicase family. RhlB subfamily. In terms of assembly, component of the RNA degradosome, which is a multiprotein complex involved in RNA processing and mRNA degradation.

It is found in the cytoplasm. The enzyme catalyses ATP + H2O = ADP + phosphate + H(+). DEAD-box RNA helicase involved in RNA degradation. Has RNA-dependent ATPase activity and unwinds double-stranded RNA. In Escherichia fergusonii (strain ATCC 35469 / DSM 13698 / CCUG 18766 / IAM 14443 / JCM 21226 / LMG 7866 / NBRC 102419 / NCTC 12128 / CDC 0568-73), this protein is ATP-dependent RNA helicase RhlB.